Here is a 376-residue protein sequence, read N- to C-terminus: ORC1-type DNA replication protein 2 (376 aa).

Residues 73-77 (TGKTS), Tyr-209, and Arg-221 contribute to the ATP site.

Belongs to the CDC6/cdc18 family.

Its function is as follows. Involved in regulation of DNA replication. The polypeptide is ORC1-type DNA replication protein 2 (cdc6-2) (Archaeoglobus fulgidus (strain ATCC 49558 / DSM 4304 / JCM 9628 / NBRC 100126 / VC-16)).